Here is an 89-residue protein sequence, read N- to C-terminus: Small ribosomal subunit protein uS15 (89 aa).

This sequence belongs to the universal ribosomal protein uS15 family. Part of the 30S ribosomal subunit. Forms a bridge to the 50S subunit in the 70S ribosome, contacting the 23S rRNA.

Functionally, one of the primary rRNA binding proteins, it binds directly to 16S rRNA where it helps nucleate assembly of the platform of the 30S subunit by binding and bridging several RNA helices of the 16S rRNA. In terms of biological role, forms an intersubunit bridge (bridge B4) with the 23S rRNA of the 50S subunit in the ribosome. The chain is Small ribosomal subunit protein uS15 from Chlamydia caviae (strain ATCC VR-813 / DSM 19441 / 03DC25 / GPIC) (Chlamydophila caviae).